A 546-amino-acid polypeptide reads, in one-letter code: (-)-5-epieremophilene synthase STPS1 (546 aa).

5 residues coordinate Mg(2+): D299, D303, D442, T446, and E450. The short motif at 299–303 (DDTYD) is the DDXXD motif element.

It belongs to the terpene synthase family. Tpsa subfamily. As to quaternary structure, monomer. Mg(2+) is required as a cofactor. As to expression, highly expressed in leaves and at lower levels in flowers.

It catalyses the reaction (2E,6E)-farnesyl diphosphate = (-)-5-epi-eremophilene + diphosphate. It participates in secondary metabolite biosynthesis; terpenoid biosynthesis. Functionally, sesquiterpene synthase that catalyzes the conversion of farnesyl diphosphate to (-)-5-epi-eremophilene. In Salvia miltiorrhiza (Chinese sage), this protein is (-)-5-epieremophilene synthase STPS1.